The sequence spans 144 residues: Protein D (144 aa).

In Escherichia coli, this protein is Protein D (D).